We begin with the raw amino-acid sequence, 107 residues long: Acidic phospholipase A2 2 (107 aa).

Disulfide bonds link Cys26-Cys100, Cys28-Cys38, Cys37-Cys82, Cys43-Cys107, Cys44-Cys75, and Cys62-Cys73. Tyr27, Gly29, and Gly31 together coordinate Ca(2+). Residue His41 is part of the active site. Asp42 is a binding site for Ca(2+). Asp76 is a catalytic residue.

Ca(2+) serves as cofactor. In terms of tissue distribution, expressed by the venom gland.

The protein localises to the secreted. It catalyses the reaction a 1,2-diacyl-sn-glycero-3-phosphocholine + H2O = a 1-acyl-sn-glycero-3-phosphocholine + a fatty acid + H(+). In terms of biological role, PLA2 catalyzes the calcium-dependent hydrolysis of the 2-acyl groups in 3-sn-phosphoglycerides. The protein is Acidic phospholipase A2 2 of Bothrops insularis (Golden lancehead).